A 464-amino-acid polypeptide reads, in one-letter code: Glutamate--tRNA ligase (464 aa).

Positions 11–21 (PSPTGFIHLGN) match the 'HIGH' region motif. Residues 243 to 247 (KMSKR) carry the 'KMSKS' region motif. Residue Lys246 participates in ATP binding.

This sequence belongs to the class-I aminoacyl-tRNA synthetase family. Glutamate--tRNA ligase type 1 subfamily. As to quaternary structure, monomer.

The protein localises to the cytoplasm. It carries out the reaction tRNA(Glu) + L-glutamate + ATP = L-glutamyl-tRNA(Glu) + AMP + diphosphate. Its function is as follows. Catalyzes the attachment of glutamate to tRNA(Glu) in a two-step reaction: glutamate is first activated by ATP to form Glu-AMP and then transferred to the acceptor end of tRNA(Glu). In Polaromonas naphthalenivorans (strain CJ2), this protein is Glutamate--tRNA ligase.